Here is a 379-residue protein sequence, read N- to C-terminus: Thiosulfate/3-mercaptopyruvate sulfurtransferase 1, mitochondrial (379 aa).

The transit peptide at 1–56 (MASTLFSRTFLAASHRLITPSLPQKIFNPATFLSRSLHSQLGSASTAYKSTTWARR) directs the protein to the mitochondrion. A57 is subject to N-acetylalanine. Rhodanese domains are found at residues 91–208 (REPD…DVES) and 259–373 (EDPT…LPIE). The active-site Cysteine persulfide intermediate is the C333.

In terms of tissue distribution, expressed in roots, rosette and cauline leaves, stems, flowers and siliques.

It localises to the mitochondrion. It catalyses the reaction thiosulfate + hydrogen cyanide = thiocyanate + sulfite + 2 H(+). It carries out the reaction 2-oxo-3-sulfanylpropanoate + [thioredoxin]-dithiol = [thioredoxin]-disulfide + hydrogen sulfide + pyruvate + H(+). Its function is as follows. Catalyzes the transfer of a sulfur ion from a donor to cyanide or to other thiol compounds. Substrate preference is 3-mercaptopyruvate &gt; thiosulfate. Involved in embryo and seed development. The polypeptide is Thiosulfate/3-mercaptopyruvate sulfurtransferase 1, mitochondrial (STR1) (Arabidopsis thaliana (Mouse-ear cress)).